Reading from the N-terminus, the 229-residue chain is MIVLLCVIFAFLVYSNWHSWLESLDRNPIRAYALTHKTRFTTNADIRETLSQKPALKGYFGQDIQDVKAKLLAISWVRDVVVRKVYPDRLSITLIEHNPVAVWNDVNFLSEQGIVFSLPPDRIDKTGFPMLYGPDTEGKVVLEAWSKIKADLKARNLDLSSVSVDNRGSWTITLSNNVELRLGRGEWTPKIDRFVTIFPEIDVPEGKKLAYVDLRYEHGAAVGFSPLPK.

A helical transmembrane segment spans residues 1-21; that stretch reads MIVLLCVIFAFLVYSNWHSWL. Residues 22-229 lie on the Periplasmic side of the membrane; sequence ESLDRNPIRA…AAVGFSPLPK (208 aa). One can recognise a POTRA domain in the interval 27–97; the sequence is NPIRAYALTH…DRLSITLIEH (71 aa).

The protein belongs to the FtsQ/DivIB family. FtsQ subfamily. As to quaternary structure, part of a complex composed of FtsB, FtsL and FtsQ.

It localises to the cell inner membrane. In terms of biological role, essential cell division protein. May link together the upstream cell division proteins, which are predominantly cytoplasmic, with the downstream cell division proteins, which are predominantly periplasmic. May control correct divisome assembly. The protein is Cell division protein FtsQ of Actinobacillus pleuropneumoniae serotype 3 (strain JL03).